A 152-amino-acid chain; its full sequence is Globin-1 subunit beta (152 aa).

The residue at position 2 (Ser2) is an N-acetylserine. In terms of domain architecture, Globin spans 12–152; sequence VSNADQKDLL…SLVAVVQAAL (141 aa). Heme b is bound by residues His72 and His104.

The protein belongs to the globin family. Heterotetramer of two alpha chains and two beta chains.

The chain is Globin-1 subunit beta from Anadara trapezia (Sydney cockle).